Consider the following 455-residue polypeptide: Probable glycine dehydrogenase (decarboxylating) subunit 1 (455 aa).

This sequence belongs to the GcvP family. N-terminal subunit subfamily. In terms of assembly, the glycine cleavage system is composed of four proteins: P, T, L and H. In this organism, the P 'protein' is a heterodimer of two subunits.

It catalyses the reaction N(6)-[(R)-lipoyl]-L-lysyl-[glycine-cleavage complex H protein] + glycine + H(+) = N(6)-[(R)-S(8)-aminomethyldihydrolipoyl]-L-lysyl-[glycine-cleavage complex H protein] + CO2. In terms of biological role, the glycine cleavage system catalyzes the degradation of glycine. The P protein binds the alpha-amino group of glycine through its pyridoxal phosphate cofactor; CO(2) is released and the remaining methylamine moiety is then transferred to the lipoamide cofactor of the H protein. The sequence is that of Probable glycine dehydrogenase (decarboxylating) subunit 1 from Saccharolobus islandicus (strain M.16.27) (Sulfolobus islandicus).